The following is a 1433-amino-acid chain: Regulatory protein CAT8 (1433 aa).

Over residues 20 to 38 (GSQALSGPSISNRTSSSEA) the composition is skewed to polar residues. The interval 20-40 (GSQALSGPSISNRTSSSEANP) is disordered. The segment at residues 70-97 (CDRCRSKKTRCDGKRPQCSQCAAVGFEC) is a DNA-binding region (zn(2)-C6 fungal-type). Positions 936–946 (KPLFGSQSKNS) are enriched in polar residues. Disordered stretches follow at residues 936 to 1024 (KPLF…DTKK), 1137 to 1162 (QNPE…NNLS), 1200 to 1236 (SASA…ILGS), and 1324 to 1433 (LNPT…QNAK). 2 stretches are compositionally biased toward basic and acidic residues: residues 947–965 (LENR…EHEY) and 994–1005 (LKYEKDAKRNAK). 3 stretches are compositionally biased toward polar residues: residues 1138–1162 (NPEN…NNLS), 1221–1235 (PPST…SILG), and 1326–1348 (PTDS…SNQR). The segment covering 1349 to 1362 (SLSSGNDSKGDSSS) has biased composition (low complexity). 2 stretches are compositionally biased toward polar residues: residues 1363–1391 (QENS…SGPS) and 1418–1433 (SNTD…QNAK).

Post-translationally, could be the target of the SNF1/CAT1 - SNF4/CAT3 kinase complex.

Its subcellular location is the nucleus. Functionally, activator of the gluconeogenic enzymes FBP1 and PCK1 genes. This Saccharomyces cerevisiae (strain ATCC 204508 / S288c) (Baker's yeast) protein is Regulatory protein CAT8 (CAT8).